A 2624-amino-acid polypeptide reads, in one-letter code: Transcription factor TFIIIB component B'' homolog (2624 aa).

The interval 1–142 (MFRRARLSVK…TKEKQPCSDR (142 aa)) is disordered. The interval 1 to 299 (MFRRARLSVK…TYSSFRKNYY (299 aa)) is interaction with ZBTB43. A compositionally biased stretch (basic and acidic residues) spans 63–77 (PQEKAPRSSTEKTGG). Low complexity predominate over residues 99 to 119 (SSTSSLVKSSVSVPSESHPLS). The span at 120 to 132 (TINQEAPQPTATS) shows a compositional bias: polar residues. Positions 133–142 (TKEKQPCSDR) are enriched in basic and acidic residues. A coiled-coil region spans residues 144 to 177 (RIYKAQKLREMLKEELRKEKKQWKNKYAINESQR). The segment at 193-241 (LPDNNPMTSSLEQEKKTEKPSTPVQTREQEGKSTPNAEDNEMEEETDDG) is disordered. A compositionally biased stretch (polar residues) spans 212 to 229 (PSTPVQTREQEGKSTPNA). The span at 230-240 (EDNEMEEETDD) shows a compositional bias: acidic residues. Residues 295–345 (RKNYYSKPWSNKETDMFFLAISMVGTDFSMIGQLFPHRARIEIKNKFKREE) enclose the Myb-like domain. The interval 355 to 470 (AFQEKRPFDF…QKKRRRKKQD (116 aa)) is required for phosphorylation by CSNK2A1. Disordered regions lie at residues 379–449 (EKRK…SRED), 544–567 (LSLS…TSDL), 606–663 (ENVK…MNTL), and 729–759 (EEIG…SRKD). The segment covering 397 to 407 (TKPRKNVKVKK) has biased composition (basic residues). Residues 552–565 (ATSVATESSESSTS) show a composition bias toward low complexity. Composition is skewed to basic and acidic residues over residues 637–663 (TESE…MNTL) and 736–759 (EKNE…SRKD). The stretch at 823–877 (GRREISSKEEVLEKILVSGEMAAALRETVRLDTSPKEMVPAEINTKEMQSDLKET) is one 1; approximate repeat. The 9 X 55 AA repeats of G-R-R-X-I-S-P-X-E-N-G-X-E-E-V-K-P-X-X-E-M-E-T-D-L-K-X-T-G-R-E-X-X-X-R-E-K-T-X-E-X-X-D-A-X-E-E-I-D-X-D-L-E-E-T stretch occupies residues 823-1327 (GRREISSKEE…PRENELEETS (505 aa)). 6 consecutive repeat copies span residues 878-932 (GRRA…LEEA), 933-987 (GRRE…LEET), 988-1040 (GRRK…LEET), 1041-1094 (EREV…LEET), 1095-1148 (EREI…LEET), and 1149-1203 (GRRE…LEET). Position 915 is a phosphothreonine (T915). Composition is skewed to basic and acidic residues over residues 930 to 957 (EEAG…ETDL) and 979 to 1006 (EIDK…KPVD). The segment at 930–1222 (EEAGRREISP…GPEEVKPVGK (293 aa)) is disordered. A compositionally biased stretch (acidic residues) spans 1030–1041 (DATEEIDLEETE). Basic and acidic residues predominate over residues 1052–1079 (EEVKPLGEMETDLKATGRDSFPRGKTPE). Residues 1078–1103 (PEVIDAIEEIEIDLEETEREISPQEN) are a coiled coil. The span at 1082–1095 (DAIEEIEIDLEETE) shows a compositional bias: acidic residues. Basic and acidic residues predominate over residues 1120–1133 (ATGREISPREKTPE). Residues 1136–1145 (DATEEIDKDL) are compositionally biased toward acidic residues. Positions 1161 to 1190 (EEVKPVDEMETDLKTTGREGSSREKTREVI) are enriched in basic and acidic residues. The segment covering 1194-1204 (EVIETDLEETE) has biased composition (acidic residues). The stretch at 1204–1257 (EREISPQENGPEEVKPVGKMETDLKEIREEISQREKVLAEFSAIREKEIDLKET) is one 8; approximate repeat. Positions 1223–1284 (METDLKEIRE…VEEMEADLKE (62 aa)) form a coiled coil. The stretch at 1258 to 1327 (GKRDIPIMEK…PRENELEETS (70 aa)) is one 9; approximate repeat. A compositionally biased stretch (basic and acidic residues) spans 1306–1321 (AELKQTGKTDISPREN). Disordered stretches follow at residues 1306–1348 (AELK…SAVP), 1365–1440 (TPVE…RFKR), 1519–1543 (TERN…VQKN), 1684–1722 (KAKP…LQKG), 1819–1863 (STSE…ASKA), 2130–2164 (GAEM…ENKD), 2181–2200 (SEVN…QEVH), 2207–2241 (VASS…GDSV), 2444–2501 (FQSR…SRPG), and 2519–2566 (SDEP…PSPS). Over residues 1326 to 1344 (TSTSRQTDTHLMQSGSNDF) the composition is skewed to polar residues. Positions 1366–1378 (PVEEKRNSEKEVS) are enriched in basic and acidic residues. Polar residues-rich tracts occupy residues 1379 to 1390 (SHFSHFKISSQT), 1411 to 1421 (SDINLSKSLPQ), and 1519 to 1529 (TERNLSPSNSC). Residues 1695–1719 (KKEEPVLEKVTTDQSKEGKPEDHLL) are compositionally biased toward basic and acidic residues. Basic residues predominate over residues 1844-1853 (RGSKRVRGKT). Over residues 2131 to 2151 (AEMETQRETEKNASKATELEN) the composition is skewed to basic and acidic residues. Positions 2470-2479 (VSDKEERTDA) are enriched in basic and acidic residues. The span at 2488–2498 (SRTSSSKASLS) shows a compositional bias: low complexity. The span at 2526–2544 (HSKKRLKPLIPGLRKKLKR) shows a compositional bias: basic residues.

Component of TFIIIB complex. The TFIIIB complex has two activities, alpha and beta. The TFIIIB-alpha and TFIIIB-beta activities are required for transcription of genes with TFIIIC-bound internal promoters and PSE transcription factor-bound external promoters, respectively. The TFIIIB-alpha activity complex is composed of TBP, BDP1, and a complex containing both BRF2 and at least four stably associated proteins; YY1 facilitates the formation of TFIIIB-alpha activity complex. The TFIIIB-beta activity complex is composed of TBP, BDP1, and BRF1. Interacts with BRF1; this interaction diminishes during mitosis resulting in the release of BDP1 from chromosomal templates. Component of TFIIIC complex. The TFIIIC complex has two activities, C1 and C2. The TFIIIC2 activity complex is only required for transcription of the 'classical' pol III genes whereas the TFIIIC1 activity complex is required for transcription of all pol III genes. The TFIIIC1 activity complex is composed at least of BDP1. Interacts with ZBTB43. In terms of processing, phosphorylated by CSNK2A1 during mitosis, resulting in its release from chromatin and suppression of polymerase III transcription. As to expression, isoform 2 is highly expressed in cerebellum.

It is found in the nucleus. Functionally, general activator of RNA polymerase III transcription. Requires for transcription from all three types of polymerase III promoters. Requires for transcription of genes with internal promoter elements and with promoter elements upstream of the initiation site. In Homo sapiens (Human), this protein is Transcription factor TFIIIB component B'' homolog (BDP1).